Consider the following 208-residue polypeptide: MNRPIFIGITGGTGSGKSTVARAIFESLPEKNIAIIEQDSYYRDQSHLALEERVKTNYDHPLAFDTALLTEHLMLLAQNKTIEKPIYDFERHTRKKEFEVIEPRDIMILEGIMILDDPALRDMLDIKIFVDTDADVRIIRRIRRDMEERGRTLTSVIQQYLTTVRPAHLQFVEPNKRYANIIIPEGGDNQVAIDIMVAKIKTIIQERS.

11–18 lines the ATP pocket; the sequence is GGTGSGKS.

The protein belongs to the uridine kinase family.

It localises to the cytoplasm. It catalyses the reaction uridine + ATP = UMP + ADP + H(+). The enzyme catalyses cytidine + ATP = CMP + ADP + H(+). The protein operates within pyrimidine metabolism; CTP biosynthesis via salvage pathway; CTP from cytidine: step 1/3. It participates in pyrimidine metabolism; UMP biosynthesis via salvage pathway; UMP from uridine: step 1/1. The sequence is that of Uridine kinase from Alkaliphilus metalliredigens (strain QYMF).